The chain runs to 255 residues: Transmembrane protein 81 (255 aa).

Positions 1–30 are cleaved as a signal peptide; that stretch reads MKVLATSFVLGSLGLAFYLPLVVTTPKTLA. Residues 31–226 are Extracellular-facing; the sequence is IPEKLQEAVG…HPKWKKKVAS (196 aa). N-linked (GlcNAc...) asparagine glycosylation occurs at Asn-45. The Ig-like domain maps to 83 to 171; it reads TNWICGMLHF…VQLVKNLRLV (89 aa). Cys-104 and Cys-160 are oxidised to a cystine. A helical transmembrane segment spans residues 227-247; the sequence is ALGIGIAIGVVGGVLVRIVLC. Residues 248-255 are Cytoplasmic-facing; it reads ALRGGLQQ.

In terms of assembly, forms a complex with IZUMO1 and SPACA6 on spermatocyte cell membrane required for fertilization. In terms of tissue distribution, highly expressed in sperm (at protein level).

It is found in the cell membrane. Essential fertilization factor required for male fertility. Part of a conserved trimeric sperm complex with the essential fertilization factors IZUMO1 and SPACA6 which bridges sperm and oocyte membranes during fertilization by binding to IZUMO1R/JUNO on the oocyte. This Homo sapiens (Human) protein is Transmembrane protein 81.